A 284-amino-acid chain; its full sequence is D-tagatose-1,6-bisphosphate aldolase subunit GatY (284 aa).

Asp82 serves as the catalytic Proton donor. His83 and His180 together coordinate Zn(2+). Gly181 is a dihydroxyacetone phosphate binding site. Residue His208 participates in Zn(2+) binding. Residues 209–211 (GAS) and 230–233 (NVAT) each bind dihydroxyacetone phosphate.

Belongs to the class II fructose-bisphosphate aldolase family. TagBP aldolase GatY subfamily. Forms a complex with GatZ. It depends on Zn(2+) as a cofactor.

It carries out the reaction D-tagatofuranose 1,6-bisphosphate = D-glyceraldehyde 3-phosphate + dihydroxyacetone phosphate. It participates in carbohydrate metabolism; D-tagatose 6-phosphate degradation; D-glyceraldehyde 3-phosphate and glycerone phosphate from D-tagatose 6-phosphate: step 2/2. Catalytic subunit of the tagatose-1,6-bisphosphate aldolase GatYZ, which catalyzes the reversible aldol condensation of dihydroxyacetone phosphate (DHAP or glycerone-phosphate) with glyceraldehyde 3-phosphate (G3P) to produce tagatose 1,6-bisphosphate (TBP). Requires GatZ subunit for full activity and stability. Is involved in the catabolism of galactitol. The sequence is that of D-tagatose-1,6-bisphosphate aldolase subunit GatY from Escherichia coli O6:K15:H31 (strain 536 / UPEC).